A 128-amino-acid polypeptide reads, in one-letter code: 3-aminoacrylate deaminase RutC (128 aa).

This sequence belongs to the RutC family.

It catalyses the reaction (Z)-3-aminoacrylate + H2O + H(+) = 3-oxopropanoate + NH4(+). Functionally, involved in pyrimidine catabolism. Catalyzes the deamination of 3-aminoacrylate to malonic semialdehyde, a reaction that can also occur spontaneously. RutC may facilitate the reaction and modulate the metabolic fitness, rather than catalyzing essential functions. The protein is 3-aminoacrylate deaminase RutC of Serratia proteamaculans (strain 568).